We begin with the raw amino-acid sequence, 163 residues long: NADH-quinone oxidoreductase subunit I (163 aa).

4Fe-4S ferredoxin-type domains lie at 53 to 83 (LRRY…IEAG) and 94 to 123 (VRYD…EGPN). 8 residues coordinate [4Fe-4S] cluster: cysteine 63, cysteine 66, cysteine 69, cysteine 73, cysteine 103, cysteine 106, cysteine 109, and cysteine 113.

It belongs to the complex I 23 kDa subunit family. NDH-1 is composed of 14 different subunits. Subunits NuoA, H, J, K, L, M, N constitute the membrane sector of the complex. The cofactor is [4Fe-4S] cluster.

The protein resides in the cell inner membrane. The catalysed reaction is a quinone + NADH + 5 H(+)(in) = a quinol + NAD(+) + 4 H(+)(out). NDH-1 shuttles electrons from NADH, via FMN and iron-sulfur (Fe-S) centers, to quinones in the respiratory chain. The immediate electron acceptor for the enzyme in this species is believed to be ubiquinone. Couples the redox reaction to proton translocation (for every two electrons transferred, four hydrogen ions are translocated across the cytoplasmic membrane), and thus conserves the redox energy in a proton gradient. The sequence is that of NADH-quinone oxidoreductase subunit I from Bartonella bacilliformis (strain ATCC 35685 / KC583 / Herrer 020/F12,63).